We begin with the raw amino-acid sequence, 118 residues long: Large ribosomal subunit protein bL20 (118 aa).

Belongs to the bacterial ribosomal protein bL20 family.

Functionally, binds directly to 23S ribosomal RNA and is necessary for the in vitro assembly process of the 50S ribosomal subunit. It is not involved in the protein synthesizing functions of that subunit. This is Large ribosomal subunit protein bL20 from Caulobacter vibrioides (strain ATCC 19089 / CIP 103742 / CB 15) (Caulobacter crescentus).